We begin with the raw amino-acid sequence, 423 residues long: Lipoamide acyltransferase component of branched-chain alpha-keto acid dehydrogenase complex (423 aa).

The region spanning 3 to 78 is the Lipoyl-binding domain; that stretch reads THVIKMPDIG…AVGSELIRIE (76 aa). K44 carries the N6-lipoyllysine modification. The Peripheral subunit-binding (PSBD) domain maps to 137–174; sequence LASPAVRKRALDAGIELRYVHGSGPAGRILHEDLDAFM. Residues H395 and D399 contribute to the active site.

Belongs to the 2-oxoacid dehydrogenase family. As to quaternary structure, forms a 24-polypeptide structural core with octahedral symmetry. (R)-lipoate is required as a cofactor.

The catalysed reaction is N(6)-[(R)-dihydrolipoyl]-L-lysyl-[protein] + 2-methylpropanoyl-CoA = N(6)-[(R)-S(8)-2-methylpropanoyldihydrolipoyl]-L-lysyl-[protein] + CoA. Functionally, the branched-chain alpha-keto dehydrogenase complex catalyzes the overall conversion of alpha-keto acids to acyl-CoA and CO(2). It contains multiple copies of three enzymatic components: branched-chain alpha-keto acid decarboxylase (E1), lipoamide acyltransferase (E2) and lipoamide dehydrogenase (E3). This Pseudomonas putida (Arthrobacter siderocapsulatus) protein is Lipoamide acyltransferase component of branched-chain alpha-keto acid dehydrogenase complex (bkdB).